A 336-amino-acid polypeptide reads, in one-letter code: Phosphoribosylformylglycinamidine cyclo-ligase (336 aa).

Belongs to the AIR synthase family.

It is found in the cytoplasm. The enzyme catalyses 2-formamido-N(1)-(5-O-phospho-beta-D-ribosyl)acetamidine + ATP = 5-amino-1-(5-phospho-beta-D-ribosyl)imidazole + ADP + phosphate + H(+). Its pathway is purine metabolism; IMP biosynthesis via de novo pathway; 5-amino-1-(5-phospho-D-ribosyl)imidazole from N(2)-formyl-N(1)-(5-phospho-D-ribosyl)glycinamide: step 2/2. The polypeptide is Phosphoribosylformylglycinamidine cyclo-ligase (Thermoanaerobacter sp. (strain X514)).